The chain runs to 551 residues: MLKRIKIVTSLLLVLAVFGLLQLTSGGLFFNALKNDKENFTVLQTIRQQQSTLNGSWVALLQTRNTLNRAGIRYMMDQNNIGSGSTVAELMESASISLKQAEKNWADYEALPRDPRQSTAAAAEIKRNYDIYHNALAELIQLLGAGKINEFFDQPTQGYQDGFEKQYVAYMEQNDRLHDIAVSDNNASYSQAMWILVGVMIVVLAVIFAVWFGIKASLVAPMNRLIDSIRHIAGGDLVKPIEVDGSNEMGQLAESLRHMQGELMRTVGDVRNGANAIYSGASEIATGNNDLSSRTEQQAASLEETAASMEQLTATVKQNAENARQASHLALSASETAQRGGKVVDNVVQTMRDISTSSQKIADIISVIDGIAFQTNILALNAAVEAARAGEQGRGFAVVAGEVRNLAQRSAQAAREIKSLIEDSVGKVDVGSTLVESAGETMAEIVSAVTRVTDIMGEIASASDEQSRGIDQVGLAVAEMDRVTQQNAALVEESAAAAAALEEQASRLTEAVAVFRIQQQQRETSAVVKTVTPAAPRKMAVADSEENWETF.

At 1-6 the chain is on the cytoplasmic side; that stretch reads MLKRIK. Residues 7 to 30 form a helical membrane-spanning segment; it reads IVTSLLLVLAVFGLLQLTSGGLFF. At 31 to 190 the chain is on the periplasmic side; the sequence is NALKNDKENF…AVSDNNASYS (160 aa). The segment at 64–73 is the 3 Arg may form a positively charged pocket, which binds the alpha-carboxyl group of the attractant AA; it reads RNTLNRAGIR. The helical transmembrane segment at 191–210 threads the bilayer; sequence QAMWILVGVMIVVLAVIFAV. The Cytoplasmic portion of the chain corresponds to 211–551; the sequence is WFGIKASLVA…ADSEENWETF (341 aa). Positions 216–268 constitute an HAMP domain; it reads ASLVAPMNRLIDSIRHIAGGDLVKPIEVDGSNEMGQLAESLRHMQGELMRTVG. The Methyl-accepting transducer domain occupies 273–502; sequence GANAIYSGAS…ESAAAAAALE (230 aa). Glutamate methyl ester (Gln) is present on Gln-297. At Glu-304 the chain carries Glutamate methyl ester (Glu). Gln-311 is modified (glutamate methyl ester (Gln)). Glutamate methyl ester (Glu) occurs at positions 493 and 502.

Belongs to the methyl-accepting chemotaxis (MCP) protein family.

It is found in the cell inner membrane. Its function is as follows. Receptor for the attractant L-serine and related amino acids. Is also responsible for chemotaxis away from a wide range of repellents, including leucine, indole, and weak acids. Chemotactic-signal transducers respond to changes in the concentration of attractants and repellents in the environment, transduce a signal from the outside to the inside of the cell, and facilitate sensory adaptation through the variation of the level of methylation. Attractants increase the level of methylation while repellents decrease the level of methylation, the methyl groups are added by the methyltransferase CheR and removed by the methylesterase CheB. This Escherichia coli (strain K12) protein is Methyl-accepting chemotaxis protein I (tsr).